A 373-amino-acid chain; its full sequence is Cytoplasmic tRNA 2-thiolation protein 1 (373 aa).

The protein belongs to the TtcA family. CTU1/NCS6/ATPBD3 subfamily.

It localises to the cytoplasm. It functions in the pathway tRNA modification; 5-methoxycarbonylmethyl-2-thiouridine-tRNA biosynthesis. In terms of biological role, plays a central role in 2-thiolation of mcm(5)S(2)U at tRNA wobble positions of tRNA(Lys), tRNA(Glu) and tRNA(Gln). Directly binds tRNAs and probably acts by catalyzing adenylation of tRNAs, an intermediate required for 2-thiolation. It is unclear whether it acts as a sulfurtransferase that transfers sulfur from thiocarboxylated URM1 onto the uridine of tRNAs at wobble position. The protein is Cytoplasmic tRNA 2-thiolation protein 1 of Caenorhabditis elegans.